A 160-amino-acid polypeptide reads, in one-letter code: Small ribosomal subunit protein uS9 (160 aa).

Belongs to the universal ribosomal protein uS9 family.

This Xanthobacter autotrophicus (strain ATCC BAA-1158 / Py2) protein is Small ribosomal subunit protein uS9.